Consider the following 352-residue polypeptide: Extracellular minor metalloprotease (352 aa).

Disordered stretches follow at residues 41-86 (GNKP…QPRR) and 144-164 (TARSSTVSPSPSTLVGHELTH). Basic and acidic residues predominate over residues 48-57 (PTEKNARAGE). Low complexity-rich tracts occupy residues 71 to 85 (ARQTGAQGGAAQQPR) and 144 to 156 (TARSSTVSPSPST). Position 160 (histidine 160) interacts with Zn(2+). Glutamate 161 is a catalytic residue. Positions 164 and 184 each coordinate Zn(2+). Histidine 262 acts as the Proton donor in catalysis. Residues 303–325 (TPTSDHLRPRHGETRAGLRTKRG) form a disordered region. Positions 304-325 (PTSDHLRPRHGETRAGLRTKRG) are enriched in basic and acidic residues.

The protein belongs to the peptidase M4 family. Zn(2+) is required as a cofactor.

Its subcellular location is the secreted. This chain is Extracellular minor metalloprotease (smp), found in Serratia marcescens (strain ATCC 21074 / E-15).